We begin with the raw amino-acid sequence, 81 residues long: Putative defensin-like protein 52 (81 aa).

Positions 1-20 (MTFFLVIILAISSSNYNVLA) are cleaved as a signal peptide. 2 disulfides stabilise this stretch: Cys31/Cys55 and Cys41/Cys64.

The protein belongs to the DEFL family.

It is found in the secreted. This Arabidopsis thaliana (Mouse-ear cress) protein is Putative defensin-like protein 52.